A 72-amino-acid chain; its full sequence is Penaeidin-2b (72 aa).

The signal sequence occupies residues 1-21; it reads MRLVVCLVFLASFALVCQGEA. Cystine bridges form between Cys-45/Cys-59, Cys-48/Cys-66, and Cys-60/Cys-67. Lys-71 bears the Lysine amide mark.

Belongs to the penaeidin family.

The protein resides in the cytoplasmic granule. Its function is as follows. Antibacterial and antifungal activity. Presents chitin-binding activity. In Penaeus vannamei (Whiteleg shrimp), this protein is Penaeidin-2b.